Consider the following 128-residue polypeptide: Cytochrome c-type biogenesis protein CcmE (128 aa).

Topologically, residues 1–8 (MQKIVRNR) are cytoplasmic. A helical; Signal-anchor for type II membrane protein membrane pass occupies residues 9 to 29 (LIKIIICFCSACLGISIILYN). Residues 30–128 (LEKNIIFFFP…KHDENYRPPS (99 aa)) are Periplasmic-facing. H120 and Y124 together coordinate heme.

The protein belongs to the CcmE/CycJ family.

The protein localises to the cell inner membrane. In terms of biological role, heme chaperone required for the biogenesis of c-type cytochromes. Transiently binds heme delivered by CcmC and transfers the heme to apo-cytochromes in a process facilitated by CcmF and CcmH. The polypeptide is Cytochrome c-type biogenesis protein CcmE (Rickettsia prowazekii (strain Madrid E)).